A 401-amino-acid chain; its full sequence is MNEVVIPSVLLDVPVSAAPVHKQNLLDLDREGLEHFFADTLGEARYRAHQVMKWIHHRYVTDFDQMTDLGKALRAKLHQHAEVLVPNVVFDKPSTDGTHKWLLAMGTDGKNAIETVYIPDKGRGTLCVSSQVGCGLNCTFCSTATQGFNRNLTTAEIIGQVWVAARHLGNVPHQQRRLTNVVMMGMGEPLMNFDNVVRAMSVMRDDLGYGLASKRVTLSTSGLVPMIDRLATESDVSLAVSLHAANDVLRESLVPLNKKYPIAELMESCARYLRGNKKRDSVTFEYTLMKGINDQPEHARQLARLMRQFDNAVQSKDAGKVNLIPFNPFPGTRYERSGETEIRAFQKILLDAQVLTMVRRTRGDDIDAACGQLKGQVMDRTRRQAEFRRTLEGQADRDAAA.

Residue Glu114 is the Proton acceptor of the active site. The 246-residue stretch at 120 to 365 folds into the Radical SAM core domain; sequence DKGRGTLCVS…TMVRRTRGDD (246 aa). A disulfide bond links Cys127 and Cys370. Cys134, Cys138, and Cys141 together coordinate [4Fe-4S] cluster. Residues 187 to 188, Ser219, 241 to 243, and Asn327 each bind S-adenosyl-L-methionine; these read GE and SLH. Residue Cys370 is the S-methylcysteine intermediate of the active site.

The protein belongs to the radical SAM superfamily. RlmN family. The cofactor is [4Fe-4S] cluster.

The protein localises to the cytoplasm. It carries out the reaction adenosine(2503) in 23S rRNA + 2 reduced [2Fe-2S]-[ferredoxin] + 2 S-adenosyl-L-methionine = 2-methyladenosine(2503) in 23S rRNA + 5'-deoxyadenosine + L-methionine + 2 oxidized [2Fe-2S]-[ferredoxin] + S-adenosyl-L-homocysteine. The enzyme catalyses adenosine(37) in tRNA + 2 reduced [2Fe-2S]-[ferredoxin] + 2 S-adenosyl-L-methionine = 2-methyladenosine(37) in tRNA + 5'-deoxyadenosine + L-methionine + 2 oxidized [2Fe-2S]-[ferredoxin] + S-adenosyl-L-homocysteine. Its function is as follows. Specifically methylates position 2 of adenine 2503 in 23S rRNA and position 2 of adenine 37 in tRNAs. m2A2503 modification seems to play a crucial role in the proofreading step occurring at the peptidyl transferase center and thus would serve to optimize ribosomal fidelity. The chain is Dual-specificity RNA methyltransferase RlmN from Xanthomonas campestris pv. campestris (strain 8004).